The chain runs to 337 residues: tRNA N6-adenosine threonylcarbamoyltransferase (337 aa).

Residues His-111 and His-115 each contribute to the Fe cation site. Substrate-binding positions include 134–138 (LVSGG), Asp-167, Gly-180, and Asn-272. Asp-300 is a binding site for Fe cation.

It belongs to the KAE1 / TsaD family. It depends on Fe(2+) as a cofactor.

The protein resides in the cytoplasm. It catalyses the reaction L-threonylcarbamoyladenylate + adenosine(37) in tRNA = N(6)-L-threonylcarbamoyladenosine(37) in tRNA + AMP + H(+). In terms of biological role, required for the formation of a threonylcarbamoyl group on adenosine at position 37 (t(6)A37) in tRNAs that read codons beginning with adenine. Is involved in the transfer of the threonylcarbamoyl moiety of threonylcarbamoyl-AMP (TC-AMP) to the N6 group of A37, together with TsaE and TsaB. TsaD likely plays a direct catalytic role in this reaction. The polypeptide is tRNA N6-adenosine threonylcarbamoyltransferase (Shewanella woodyi (strain ATCC 51908 / MS32)).